A 127-amino-acid chain; its full sequence is Histone H2B type 1-A (127 aa).

Residues 1-32 (MPEVSAKGTTISKKGFKKAVTKTQKKEGRKRK) are disordered. Position 2 is an N-acetylproline (Pro-2). N6-acetyllysine; alternate occurs at positions 7, 13, 14, 17, 18, 22, and 25. 8 positions are modified to N6-crotonyllysine; alternate: Lys-7, Lys-13, Lys-14, Lys-17, Lys-18, Lys-22, Lys-25, and Lys-36. Residues Lys-7 and Lys-13 each carry the N6-lactoyllysine; alternate modification. Lys-7 is covalently cross-linked (Glycyl lysine isopeptide (Lys-Gly) (interchain with G-Cter in SUMO2); alternate). N6-lactoyllysine; alternate occurs at positions 17, 18, 22, and 25. Lys-22 participates in a covalent cross-link: Glycyl lysine isopeptide (Lys-Gly) (interchain with G-Cter in SUMO2); alternate. Lys-36 carries the N6-succinyllysine; alternate modification. Lys-36 is covalently cross-linked (Glycyl lysine isopeptide (Lys-Gly) (interchain with G-Cter in ubiquitin); alternate). Residue Ser-38 is modified to Phosphoserine. Lys-45 bears the N6-lactoyllysine; alternate mark. Residue Lys-48 is modified to N6-methyllysine. Lys-59 is modified (N6,N6-dimethyllysine). Position 81 is a dimethylated arginine (Arg-81). Lys-87 is subject to N6-acetyllysine; alternate. Residue Lys-87 is modified to N6-lactoyllysine; alternate. Lys-87 carries the post-translational modification N6,N6,N6-trimethyllysine; alternate. An omega-N-methylarginine mark is found at Arg-88 and Arg-94. An N6-lactoyllysine; alternate modification is found at Lys-110. Lys-110 is modified (N6-methyllysine). Thr-117 carries the post-translational modification Phosphothreonine. N6-lactoyllysine; alternate is present on residues Lys-118 and Lys-122. Lys-118 and Lys-122 each carry N6-succinyllysine; alternate. At Lys-118 the chain carries N6-methylated lysine; alternate. Lys-122 participates in a covalent cross-link: Glycyl lysine isopeptide (Lys-Gly) (interchain with G-Cter in ubiquitin); alternate.

This sequence belongs to the histone H2B family. As to quaternary structure, the nucleosome is a histone octamer containing two molecules each of H2A, H2B, H3 and H4 assembled in one H3-H4 heterotetramer and two H2A-H2B heterodimers. In terms of processing, monoubiquitination at Lys-36 by the MSL1/MSL2 dimer is required for histone H3 'Lys-4' (H3K4me) and 'Lys-79' (H3K79me) methylation and transcription activation at specific gene loci, such as HOXA9 and MEIS1 loci. Similarly, monoubiquitination of Lys-122 (H2BK120Ub) by the RNF20/40 complex gives a specific tag for epigenetic transcriptional activation and is also prerequisite for histone H3 'Lys-4' and 'Lys-79' methylation. It also functions cooperatively with the FACT dimer to stimulate elongation by RNA polymerase II. H2BK120Ub also acts as a regulator of mRNA splicing: deubiquitination by USP49 is required for efficient cotranscriptional splicing of a large set of exons. Crotonylation (Kcr) is specifically present in male germ cells and marks testis-specific genes in post-meiotic cells, including X-linked genes that escape sex chromosome inactivation in haploid cells. Crotonylation marks active promoters and enhancers and confers resistance to transcriptional repressors. It is also associated with post-meiotically activated genes on autosomes. Post-translationally, acetylated during spermatogenesis. Acetylated form is most abundant in spermatogonia compared to spermatocytes and round spermatids. In terms of processing, phosphorylated at Thr-117 in spermatogonia, spermatocytes and round spermatids. Methylated at Lys-118 in spermatogonia, spermatocytes and round spermatids. Post-translationally, lactylated in macrophages by EP300/P300 by using lactoyl-CoA directly derived from endogenous or exogenous lactate, leading to stimulates gene transcription. Testis. Expressed in pachytene spermatocytes during meiotic prophase I in the absence of any significant DNA synthesis.

It is found in the nucleus. The protein resides in the chromosome. In terms of biological role, variant histone specifically required to direct the transformation of dissociating nucleosomes to protamine in male germ cells. Entirely replaces classical histone H2B prior nucleosome to protamine transition and probably acts as a nucleosome dissociating factor that creates a more dynamic chromatin, facilitating the large-scale exchange of histones. Core component of nucleosome. Nucleosomes wrap and compact DNA into chromatin, limiting DNA accessibility to the cellular machineries which require DNA as a template. Histones thereby play a central role in transcription regulation, DNA repair, DNA replication and chromosomal stability. DNA accessibility is regulated via a complex set of post-translational modifications of histones, also called histone code, and nucleosome remodeling. The chain is Histone H2B type 1-A from Rattus norvegicus (Rat).